The primary structure comprises 277 residues: Chitosanase (277 aa).

A signal peptide spans 1–35; sequence MKISMQKADFWKKAAISLLVFTMFFTLMMSETVFA. E54 (proton donor) is an active-site residue. The active-site Nucleophile is the D70.

It belongs to the glycosyl hydrolase 46 family.

It localises to the secreted. It catalyses the reaction Endohydrolysis of beta-(1-&gt;4)-linkages between D-glucosamine residues in a partly acetylated chitosan.. In terms of biological role, aids in the defense against invading fungal pathogens by degrading their cell wall chitosan. The polypeptide is Chitosanase (csn) (Bacillus subtilis (strain 168)).